The following is a 156-amino-acid chain: Small ribosomal subunit protein uS7 (156 aa).

It belongs to the universal ribosomal protein uS7 family. Part of the 30S ribosomal subunit. Contacts proteins S9 and S11.

Its function is as follows. One of the primary rRNA binding proteins, it binds directly to 16S rRNA where it nucleates assembly of the head domain of the 30S subunit. Is located at the subunit interface close to the decoding center, probably blocks exit of the E-site tRNA. The polypeptide is Small ribosomal subunit protein uS7 (Macrococcus caseolyticus (strain JCSC5402) (Macrococcoides caseolyticum)).